The chain runs to 229 residues: Cytidylate kinase (229 aa).

Residue 12-20 (GPSGAGKGT) participates in ATP binding.

Belongs to the cytidylate kinase family. Type 1 subfamily.

Its subcellular location is the cytoplasm. The enzyme catalyses CMP + ATP = CDP + ADP. It carries out the reaction dCMP + ATP = dCDP + ADP. The chain is Cytidylate kinase from Serratia proteamaculans (strain 568).